Here is a 234-residue protein sequence, read N- to C-terminus: MHFSPALKPGKLLKRYKRFLADVQLEDGTEITLHCPNTGSMRNCLFPGETVWFSTSNNPKRKYAHTWELMTTPTGGLIGIHSGNANALVEEALNKGIITELTGYDSLSREVKYGDENSRIDILLEAAQKPACYIEVKSCTLLEDGQGYFPDAVSLRGQKHLRELMHMASLGHRAVLLFVVQHTDIHSVAPAAHIDPEYANLLKKAILSGVEVLAYRCEISPDEIHLAQSCPVRV.

The protein belongs to the SfsA family.

The sequence is that of Sugar fermentation stimulation protein homolog from Shewanella sp. (strain MR-7).